We begin with the raw amino-acid sequence, 322 residues long: MIKAGIIGGAGYTAGELIRLLINHPETEIVFINSTSNAGNKITDVHEGLYGECDLAFTDELPLEDIDVLFFCTAHGDTKKFMESHNIPEELKIIDLSMDYRIASPDHDFIYGLPELNRRATCTAKHVANPGCFATCIQLGLLPLAKHLMLNEDVMVNAITGSTGAGVKPGATSHFSWRNNNMSVYKAFEHQHVPEIKQSLKQLQNSFDAEIDFIPYRGDFPRGIFATLVVKTKVALEEIVRMYEEYYAKDSFVHIVDKNIDLKQVVNTNKCLIHLEKHGDKLLIISCIDNLLKGASGQAVHNMNLMFNLEETVGLRLKPSAF.

Residue Cys132 is part of the active site.

This sequence belongs to the NAGSA dehydrogenase family. Type 1 subfamily.

Its subcellular location is the cytoplasm. The catalysed reaction is N-acetyl-L-glutamate 5-semialdehyde + phosphate + NADP(+) = N-acetyl-L-glutamyl 5-phosphate + NADPH + H(+). It functions in the pathway amino-acid biosynthesis; L-arginine biosynthesis; N(2)-acetyl-L-ornithine from L-glutamate: step 3/4. Catalyzes the NADPH-dependent reduction of N-acetyl-5-glutamyl phosphate to yield N-acetyl-L-glutamate 5-semialdehyde. This Bacteroides fragilis (strain ATCC 25285 / DSM 2151 / CCUG 4856 / JCM 11019 / LMG 10263 / NCTC 9343 / Onslow / VPI 2553 / EN-2) protein is N-acetyl-gamma-glutamyl-phosphate reductase.